The chain runs to 264 residues: tRNA (guanine-N(1)-)-methyltransferase (264 aa).

Residues Gly-125 and 145–150 (LGDFVL) each bind S-adenosyl-L-methionine.

It belongs to the RNA methyltransferase TrmD family. Homodimer.

The protein resides in the cytoplasm. It carries out the reaction guanosine(37) in tRNA + S-adenosyl-L-methionine = N(1)-methylguanosine(37) in tRNA + S-adenosyl-L-homocysteine + H(+). In terms of biological role, specifically methylates guanosine-37 in various tRNAs. This chain is tRNA (guanine-N(1)-)-methyltransferase, found in Burkholderia lata (strain ATCC 17760 / DSM 23089 / LMG 22485 / NCIMB 9086 / R18194 / 383).